The primary structure comprises 494 residues: Cytochrome P450 2B11 (494 aa).

Ser128 is subject to Phosphoserine; by PKA. Cys436 provides a ligand contact to heme.

Belongs to the cytochrome P450 family. It depends on heme as a cofactor.

Its subcellular location is the endoplasmic reticulum membrane. The protein localises to the microsome membrane. It carries out the reaction an organic molecule + reduced [NADPH--hemoprotein reductase] + O2 = an alcohol + oxidized [NADPH--hemoprotein reductase] + H2O + H(+). Functionally, cytochromes P450 are a group of heme-thiolate monooxygenases. In liver microsomes, this enzyme is involved in an NADPH-dependent electron transport pathway. This isozyme seems responsible for metabolism of 2,2',4,4',5,5'-hexachlorobiphenyl. In Canis lupus familiaris (Dog), this protein is Cytochrome P450 2B11 (CYP2B11).